A 2270-amino-acid chain; its full sequence is Protein DOP1B (2270 aa).

3 disordered regions span residues 548–572 (METP…VEGE), 697–716 (LKQR…TEEE), and 1084–1145 (QEQD…DMPR). Polar residues predominate over residues 1095 to 1145 (ADTSTGHNDSDNTSSFTPSSVDLSSDQNYRDNTAGQVTHKNTGQQNMDMPR).

Belongs to the DOP1 family.

It is found in the golgi apparatus membrane. Functionally, may be involved in protein traffic between late Golgi and early endosomes. The protein is Protein DOP1B (dop1b) of Xenopus laevis (African clawed frog).